The chain runs to 359 residues: Membrane-bound lytic murein transglycosylase C (359 aa).

The first 16 residues, 1 to 16, serve as a signal peptide directing secretion; sequence MKKYLALALIAPLLIS. The N-palmitoyl cysteine moiety is linked to residue Cys17. Residue Cys17 is the site of S-diacylglycerol cysteine attachment.

The protein belongs to the transglycosylase Slt family.

It localises to the cell outer membrane. The enzyme catalyses Exolytic cleavage of the (1-&gt;4)-beta-glycosidic linkage between N-acetylmuramic acid (MurNAc) and N-acetylglucosamine (GlcNAc) residues in peptidoglycan, from either the reducing or the non-reducing ends of the peptidoglycan chains, with concomitant formation of a 1,6-anhydrobond in the MurNAc residue.. In terms of biological role, murein-degrading enzyme. May play a role in recycling of muropeptides during cell elongation and/or cell division. The sequence is that of Membrane-bound lytic murein transglycosylase C from Shigella dysenteriae serotype 1 (strain Sd197).